A 136-amino-acid polypeptide reads, in one-letter code: ATP synthase epsilon chain (136 aa).

It belongs to the ATPase epsilon chain family. In terms of assembly, F-type ATPases have 2 components, CF(1) - the catalytic core - and CF(0) - the membrane proton channel. CF(1) has five subunits: alpha(3), beta(3), gamma(1), delta(1), epsilon(1). CF(0) has three main subunits: a, b and c.

It is found in the cell inner membrane. Produces ATP from ADP in the presence of a proton gradient across the membrane. In Myxococcus xanthus (strain DK1622), this protein is ATP synthase epsilon chain.